A 223-amino-acid chain; its full sequence is Neurotrophic factor BDNF precursor form (223 aa).

The first 5 residues, 1–5 (SCMKA), serve as a signal peptide directing secretion. The propeptide occupies 6–114 (APMKEVSIRG…AANMSMRVRR (109 aa)). The N-linked (GlcNAc...) asparagine glycan is linked to asparagine 107. Disulfide bonds link cysteine 127/cysteine 194 and cysteine 172/cysteine 223.

It belongs to the NGF-beta family.

Its subcellular location is the secreted. Promotes the survival of neuronal populations that are all located either in the central nervous system or directly connected to it. The sequence is that of Neurotrophic factor BDNF precursor form (BDNF) from Lichanura trivirgata (Rosy boa).